The sequence spans 397 residues: L-aspartate--L-methionine ligase (397 aa).

The 217-residue stretch at 131–347 (VALNNKARIP…FFNTILKYVK (217 aa)) folds into the ATP-grasp domain. Residues lysine 136, valine 171, lysine 173, glycine 183, valine 186, isoleucine 188, glutamate 215, glutamine 216, isoleucine 218, asparagine 223, and threonine 246 each coordinate ADP. Position 288 (aspartate 288) interacts with Mg(2+). 2 residues coordinate ADP: leucine 290 and isoleucine 300. Aspartate 301 serves as a coordination point for Mg(2+). Catalysis depends on arginine 305, which acts as the Critical for catalysis.

Primarily a monomer in solution. Minor homodimer formation. Mg(2+) is required as a cofactor.

It catalyses the reaction L-aspartate + L-methionine + ATP = L-aspartyl-L-methionine + ADP + phosphate + H(+). Its pathway is amino-acid metabolism. Its function is as follows. L-amino acid ligase, which preferentially catalyzes the formation of L-aspartyl-L-methionine dipeptide from L-aspartate and L-methionine in the presence of ATP. Less active with L-asparagine and L-methionine as substrates. Less active with L-aspartate and either L-phenylalanine, L-valine, L-leucine or L-isoleucine as substrates. Decreased activity when L-methionine is substituted with seleno-DL-methionine, L-homocysteine, L-methionine sulfoxide, L-methionine sulfoximine and o-acetyl-L-serine. Decreased activity with acetylation of L-methionine amino group. Decreased activity by modification of L-methionine carboxylate to L-methionine methyl ester. No activity when L-methionine is substituted with L-homoserine. No activity with formylation of L-methionine amino group. No activity by modification of L-methionine carboxylate to L-methionine-glycine carboxylate. No activity when L-aspartate substrate is replaced by analogs such as L-homoserine, DL-aspartate beta-methyl ester, L-glutamate or o-acetyl-L-serine. No activity when L-aspartate amino and alpha-carboxylate groups are modified to L-malate, glycine-L-aspartate, L-aspartate-glycine or N-carbamoyl-DL-aspartate. No activity with L-methionine or L-aspartate as sole substrates. No activity in presence of other nucleoside triphosphates including GTP, CTP, UTP, TTP or ITP. Involved in sulfur amino acid metabolism. The polypeptide is L-aspartate--L-methionine ligase (Staphylococcus aureus (strain NCTC 8325 / PS 47)).